The primary structure comprises 611 residues: Translation initiation factor RLI1 (611 aa).

4Fe-4S ferredoxin-type domains are found at residues 7–31 and 46–75; these read RVAI…SCPV and RIAF…IINL. ABC transporter domains are found at residues 77–318 and 345–565; these read TNLE…FLDG and AEKS…LKNL. Residues 110–117 and 382–389 contribute to the ATP site; these read GTNGIGKS and GENGTGKT.

This sequence belongs to the ABC transporter superfamily. ABCE family. In terms of assembly, component of the multifactor complex (MFC). The complex associates with pre-initiation complexes.

The protein resides in the cytoplasm. The protein localises to the nucleus. Component of the multifactor complex (MFC) involved in translation initiation. Required for the binding of MFC to the 40S ribosome. Required for the processing and nuclear export of the 60S and 40S ribosomal subunits. The sequence is that of Translation initiation factor RLI1 (RLI1) from Chaetomium thermophilum (strain DSM 1495 / CBS 144.50 / IMI 039719) (Thermochaetoides thermophila).